The primary structure comprises 428 residues: Dihydroorotase (428 aa).

Residues His-59 and His-61 each contribute to the Zn(2+) site. Substrate contacts are provided by residues 61–63 and Asn-93; that span reads HLR. Zn(2+) contacts are provided by Asp-151, His-178, and His-231. Asn-277 provides a ligand contact to substrate. Residue Asp-304 coordinates Zn(2+). The active site involves Asp-304. Substrate contacts are provided by residues His-308 and 322-323; that span reads FG.

Belongs to the metallo-dependent hydrolases superfamily. DHOase family. Class I DHOase subfamily. The cofactor is Zn(2+).

It carries out the reaction (S)-dihydroorotate + H2O = N-carbamoyl-L-aspartate + H(+). It functions in the pathway pyrimidine metabolism; UMP biosynthesis via de novo pathway; (S)-dihydroorotate from bicarbonate: step 3/3. In terms of biological role, catalyzes the reversible cyclization of carbamoyl aspartate to dihydroorotate. The polypeptide is Dihydroorotase (Bacillus pumilus (strain SAFR-032)).